A 475-amino-acid chain; its full sequence is Vitronectin (475 aa).

Positions 1 to 19 (MAPLRPIFTLALLLWVVLA) are cleaved as a signal peptide. Positions 20 to 63 (DQESCKDRCTEGFNANRKCQCDELCSYYQSCCADYAAECKPQVT) constitute an SMB domain. 7 cysteine pairs are disulfide-bonded: Cys-24–Cys-28, Cys-24–Cys-40, Cys-28–Cys-58, Cys-38–Cys-40, Cys-38–Cys-51, Cys-44–Cys-50, and Cys-51–Cys-58. The Cell attachment site signature appears at 64-66 (RGD). Phosphothreonine is present on Thr-69. Residues Tyr-75, Tyr-78, and Tyr-80 each carry the sulfotyrosine modification. The N-linked (GlcNAc...) asparagine glycan is linked to Asn-87. The interval 87-123 (NASVHAQPESPTVGQEPTLSPDLQTEGGAEPTHEVPL) is disordered. The span at 95 to 109 (ESPTVGQEPTLSPDL) shows a compositional bias: polar residues. Hemopexin repeat units lie at residues 158–202 (GKPF…VWGI), 203–250 (EGPI…FSGI), and 251–305 (PDNV…FEHF). Residues Asn-169 and Asn-242 are each glycosylated (N-linked (GlcNAc...) asparagine). A sulfotyrosine mark is found at Tyr-279 and Tyr-282. Phosphoserine is present on Ser-312. A disordered region spans residues 359-391 (LTPSPSAKKQKSRRRSRKRYRSRYGRGRSQNSR). Residues 366 to 384 (KKQKSRRRSRKRYRSRYGR) show a composition bias toward basic residues. Residues 366–392 (KKQKSRRRSRKRYRSRYGRGRSQNSRR) are glycosaminoglycan binding region. Ser-394 carries the post-translational modification Phosphoserine. The Hemopexin 4 repeat unit spans residues 419-469 (TSWLKPATSEPIQSVYFFSGDKYYRVNLRTQRVDTVNPPYPRSIAQYWLGC).

As to quaternary structure, interacts with SERPINE1/PAI1 and C1QBP. Monomer. In terms of processing, sulfated on tyrosine residues. Post-translationally, N- and O-glycosylated. It has been suggested that the active SMB domain may be permitted considerable disulfide bond heterogeneity or variability, thus two alternate disulfide patterns based on 3D structures are described with 1 disulfide bond conserved in both. As to expression, plasma.

It localises to the secreted. The protein resides in the extracellular space. Vitronectin is a cell adhesion and spreading factor found in serum and tissues. Vitronectin interact with glycosaminoglycans and proteoglycans. Is recognized by certain members of the integrin family and serves as a cell-to-substrate adhesion molecule. Inhibitor of the membrane-damaging effect of the terminal cytolytic complement pathway. This is Vitronectin (VTN) from Oryctolagus cuniculus (Rabbit).